The following is an 82-amino-acid chain: Sulfur carrier protein TusA (82 aa).

The Cysteine persulfide intermediate role is filled by C19.

The protein belongs to the sulfur carrier protein TusA family.

The protein localises to the cytoplasm. Sulfur carrier protein which probably makes part of a sulfur-relay system. The protein is Sulfur carrier protein TusA of Vibrio campbellii (strain ATCC BAA-1116).